Consider the following 428-residue polypeptide: Adenylosuccinate synthetase (428 aa).

GTP-binding positions include 12–18 (GDEGKGK) and 40–42 (GHT). Asp-13 serves as the catalytic Proton acceptor. Mg(2+)-binding residues include Asp-13 and Gly-40. Residues 13–16 (DEGK), 38–41 (NAGH), Thr-128, Arg-142, Gln-223, Thr-238, and Arg-302 contribute to the IMP site. His-41 acts as the Proton donor in catalysis. 298–304 (TTTGRPR) provides a ligand contact to substrate. Residues Arg-304, 330 to 332 (KLD), and 412 to 414 (SVG) each bind GTP.

This sequence belongs to the adenylosuccinate synthetase family. In terms of assembly, homodimer. The cofactor is Mg(2+).

It is found in the cytoplasm. The catalysed reaction is IMP + L-aspartate + GTP = N(6)-(1,2-dicarboxyethyl)-AMP + GDP + phosphate + 2 H(+). It participates in purine metabolism; AMP biosynthesis via de novo pathway; AMP from IMP: step 1/2. Plays an important role in the de novo pathway of purine nucleotide biosynthesis. Catalyzes the first committed step in the biosynthesis of AMP from IMP. The sequence is that of Adenylosuccinate synthetase from Brevibacillus brevis (strain 47 / JCM 6285 / NBRC 100599).